Reading from the N-terminus, the 507-residue chain is ATP synthase subunit alpha (507 aa).

An ATP-binding site is contributed by 171–178 (GDRQTGKT).

The protein belongs to the ATPase alpha/beta chains family. In terms of assembly, F-type ATPases have 2 components, CF(1) - the catalytic core - and CF(0) - the membrane proton channel. CF(1) has five subunits: alpha(3), beta(3), gamma(1), delta(1), epsilon(1). CF(0) has three main subunits: a(1), b(2) and c(9-12). The alpha and beta chains form an alternating ring which encloses part of the gamma chain. CF(1) is attached to CF(0) by a central stalk formed by the gamma and epsilon chains, while a peripheral stalk is formed by the delta and b chains.

The protein localises to the cell inner membrane. The catalysed reaction is ATP + H2O + 4 H(+)(in) = ADP + phosphate + 5 H(+)(out). Produces ATP from ADP in the presence of a proton gradient across the membrane. The alpha chain is a regulatory subunit. This chain is ATP synthase subunit alpha, found in Bdellovibrio bacteriovorus (strain ATCC 15356 / DSM 50701 / NCIMB 9529 / HD100).